The primary structure comprises 30 residues: Root cyclotide 1 (30 aa).

The cyclopeptide (Gly-Asn) cross-link spans 1–30; that stretch reads GIPCAESCVWIPCTVTALLGCSCSNKVCYN. 3 cysteine pairs are disulfide-bonded: C4–C21, C8–C23, and C13–C28.

In terms of processing, this is a cyclic peptide. In terms of tissue distribution, expressed in roots.

Functionally, probably participates in a plant defense mechanism. This chain is Root cyclotide 1, found in Viola hederacea (Australian violet).